The following is a 322-amino-acid chain: Dioxygenase himG (322 aa).

Residues His148 and His229 each coordinate Fe cation.

The protein belongs to the PhyH family. In terms of assembly, homodimer. It depends on Fe cation as a cofactor.

The protein operates within secondary metabolite biosynthesis. Polyketide synthase-nonribosomal peptide synthetase; part of the him gene cluster that mediates the biosynthesis of himeic acid A, a ubiquitin-activating enzyme (E1) inhibitor. First, himA, together with the trans-enoyl reductase himH, catalyzes the formation of apolyketide chain, which is then condensed with leucine by the NRPS activity of himA. Dieckmann cyclization and release from himA gives a tetramic acid intermediate as the product of himA PKS-NRPS. HimG then catalyzes alpha-oxidation of the tetramic acid ring, with a subsequent rearrangement to yield apyrone intermediate. Two terminal methyl groups of polyketide and amide side chains are oxidized to carboxylic acids by himC cytochrome P450 monooxygenase to form himeic acid A. Himeic acid A is further converted to himeic acid B and C during culture growth. No gene responsible for pyrone to pyridone conversion was found in the him gene cluster and himeic acid A is non-enzymatically converted to himeic acid C by the incorporation of an ammonium nitrogen atom in a pH5 buffer, and to himeic acid B at a conversion ratio of 50% during incubation in MeOH for 5 days. The chain is Dioxygenase himG from Aspergillus japonicus.